The sequence spans 403 residues: uncharacterized protein (403 aa).

Position 81 (H81) interacts with Zn(2+). Residue D83 is part of the active site. Position 114 (D114) interacts with Zn(2+). The active-site Proton acceptor is the E148. Positions 149, 174, and 374 each coordinate Zn(2+).

This sequence belongs to the peptidase M20A family. Requires Zn(2+) as cofactor. Co(2+) is required as a cofactor.

This is an uncharacterized protein from Escherichia coli O157:H7.